Reading from the N-terminus, the 99-residue chain is Small ribosomal subunit protein eS24 (99 aa).

Belongs to the eukaryotic ribosomal protein eS24 family.

In Methanothrix thermoacetophila (strain DSM 6194 / JCM 14653 / NBRC 101360 / PT) (Methanosaeta thermophila), this protein is Small ribosomal subunit protein eS24.